Consider the following 154-residue polypeptide: CS6 fimbrial subunit A (154 aa).

The first 18 residues, methionine 1–alanine 18, serve as a signal peptide directing secretion.

Its subcellular location is the fimbrium. Fimbriae (also called pili), polar filaments radiating from the surface of the bacterium to a length of 0.5-1.5 micrometers and numbering 100-300 per cell, enable bacteria to colonize the epithelium of specific host organs. In Escherichia coli, this protein is CS6 fimbrial subunit A (cssA).